We begin with the raw amino-acid sequence, 127 residues long: Holo-[acyl-carrier-protein] synthase (127 aa).

Asp8 and Glu56 together coordinate Mg(2+).

Belongs to the P-Pant transferase superfamily. AcpS family. The cofactor is Mg(2+).

It localises to the cytoplasm. The catalysed reaction is apo-[ACP] + CoA = holo-[ACP] + adenosine 3',5'-bisphosphate + H(+). In terms of biological role, transfers the 4'-phosphopantetheine moiety from coenzyme A to a Ser of acyl-carrier-protein. The polypeptide is Holo-[acyl-carrier-protein] synthase (Caldanaerobacter subterraneus subsp. tengcongensis (strain DSM 15242 / JCM 11007 / NBRC 100824 / MB4) (Thermoanaerobacter tengcongensis)).